The following is an 89-amino-acid chain: Large ribosomal subunit protein uL23cz/uL23cy (89 aa).

The protein belongs to the universal ribosomal protein uL23 family. As to quaternary structure, part of the 50S ribosomal subunit.

The protein resides in the plastid. It localises to the chloroplast. In terms of biological role, binds to 23S rRNA. In Calycanthus floridus var. glaucus (Eastern sweetshrub), this protein is Large ribosomal subunit protein uL23cz/uL23cy (rpl23-A).